The sequence spans 315 residues: Small ribosomal subunit biogenesis GTPase RsgA (315 aa).

Residues 79–243 form the CP-type G domain; that stretch reads LSKESHILGA…LIDTPGIKGF (165 aa). Residues 128–131 and 182–190 contribute to the GTP site; these read NKID and GHSGVGKSS. Zn(2+) contacts are provided by Cys-267, Cys-272, His-274, and Cys-280.

Belongs to the TRAFAC class YlqF/YawG GTPase family. RsgA subfamily. Monomer. Associates with 30S ribosomal subunit, binds 16S rRNA. Zn(2+) serves as cofactor.

The protein localises to the cytoplasm. Its function is as follows. One of several proteins that assist in the late maturation steps of the functional core of the 30S ribosomal subunit. Helps release RbfA from mature subunits. May play a role in the assembly of ribosomal proteins into the subunit. Circularly permuted GTPase that catalyzes slow GTP hydrolysis, GTPase activity is stimulated by the 30S ribosomal subunit. The protein is Small ribosomal subunit biogenesis GTPase RsgA of Porphyromonas gingivalis (strain ATCC 33277 / DSM 20709 / CIP 103683 / JCM 12257 / NCTC 11834 / 2561).